The sequence spans 432 residues: MEYTVEDLSPVKKKVNISVPVEEVEAALSAAIAMYRTNMSLDGFRKGKVPSNLVESRFRKEIYGEATQDLVNVHINEVMTALDANPISRIDFDGGQLERGTPFEYSISFEVLPEFDLPDYDGFAVEQEKAVVDMKEVDEVITRIRTNMAELVPVAEARPGKDGDVVVLDFAAFENGEPVEGISAENFQMNLGDRQALEDFENLVKTLAPGQEGEGPLNFPADFINPDFAGKSLTVKVKVHAVKERRLPEANDELAQKAGGFESMDKMREAVTSSYMQSRTQLVKATAQKTMLDKLLKMVDFPLPESMVDMYVGHLLDDMRSKLERQGKSMESLGKKPEELRAEVRPEAEQVTRTQIFLLRAARKEGVEVNEQEIDGQIQQIAMRSGQDYNALKDYYIKNNLIFSLRDRMLADKAMDAIYEKAAVTEVEPAAK.

A PPIase FKBP-type domain is found at 163–248 (GDVVVLDFAA…VHAVKERRLP (86 aa)).

This sequence belongs to the FKBP-type PPIase family. Tig subfamily.

Its subcellular location is the cytoplasm. The enzyme catalyses [protein]-peptidylproline (omega=180) = [protein]-peptidylproline (omega=0). Functionally, involved in protein export. Acts as a chaperone by maintaining the newly synthesized protein in an open conformation. Functions as a peptidyl-prolyl cis-trans isomerase. The protein is Trigger factor of Nitratidesulfovibrio vulgaris (strain DSM 19637 / Miyazaki F) (Desulfovibrio vulgaris).